Consider the following 585-residue polypeptide: Arginine--tRNA ligase (585 aa).

The 'HIGH' region signature appears at 131 to 141 (ANPTGPMHVGH).

Belongs to the class-I aminoacyl-tRNA synthetase family. Monomer.

It localises to the cytoplasm. It catalyses the reaction tRNA(Arg) + L-arginine + ATP = L-arginyl-tRNA(Arg) + AMP + diphosphate. The sequence is that of Arginine--tRNA ligase from Bartonella bacilliformis (strain ATCC 35685 / KC583 / Herrer 020/F12,63).